A 272-amino-acid chain; its full sequence is Ribonuclease HII (272 aa).

The RNase H type-2 domain maps to 87 to 272 (KYVAGVDEVG…HRMSFLKNIL (186 aa)). A divalent metal cation-binding residues include D93, E94, and D188.

This sequence belongs to the RNase HII family. It depends on Mn(2+) as a cofactor. Mg(2+) is required as a cofactor.

It is found in the cytoplasm. The enzyme catalyses Endonucleolytic cleavage to 5'-phosphomonoester.. Its function is as follows. Endonuclease that specifically degrades the RNA of RNA-DNA hybrids. The sequence is that of Ribonuclease HII from Clostridium perfringens (strain ATCC 13124 / DSM 756 / JCM 1290 / NCIMB 6125 / NCTC 8237 / Type A).